A 35-amino-acid polypeptide reads, in one-letter code: Neurotoxin (35 aa).

Cystine bridges form between C7–C27, C14–C32, and C18–C34.

In terms of tissue distribution, expressed by the venom gland.

It is found in the secreted. In terms of biological role, neurotoxin. Decreases the action potential of myelinated nerves in mice and frogs. This Buthus sp. (strain IY-2001) (Scorpion) protein is Neurotoxin.